Reading from the N-terminus, the 330-residue chain is Ferredoxin--NADP reductase (330 aa).

The FAD site is built by glutamate 35, glutamine 43, tyrosine 48, valine 90, phenylalanine 123, aspartate 285, and threonine 326.

This sequence belongs to the ferredoxin--NADP reductase type 2 family. In terms of assembly, homodimer. Requires FAD as cofactor.

The enzyme catalyses 2 reduced [2Fe-2S]-[ferredoxin] + NADP(+) + H(+) = 2 oxidized [2Fe-2S]-[ferredoxin] + NADPH. This Streptococcus pyogenes serotype M6 (strain ATCC BAA-946 / MGAS10394) protein is Ferredoxin--NADP reductase.